Here is a 696-residue protein sequence, read N- to C-terminus: Mitosis initiation protein fs(1)Ya (696 aa).

3 disordered regions span residues 245-285 (NAST…RAWK), 336-379 (EHSS…YSTS), and 457-492 (IKFETPPKSSQQMRSNGEGDETKDQFFTPEPGTPEI). Low complexity-rich tracts occupy residues 270–281 (QQQQQQQQPLQQ) and 361–379 (SESSASEVNSGSSSSYSTS). Residues 448–696 (TGAGINKKQI…REPIERMRRQ (249 aa)) are rich in charged AA. Thr-478, Thr-484, and Thr-489 each carry phosphothreonine. 2 short sequence motifs (nuclear localization signal) span residues 512–520 (PKKDKPKEK) and 534–538 (QPRVR). 2 disordered regions span residues 555 to 586 (DVGEPEVVDAEEEDEVFRPTNASTCNDKKLEA) and 603 to 696 (PASL…MRRQ). Residues 557 to 569 (GEPEVVDAEEEDE) are compositionally biased toward acidic residues. Basic and acidic residues-rich tracts occupy residues 607–624 (RGEREKDRDRDRDSDKEN) and 685–696 (RPREPIERMRRQ).

Its subcellular location is the nucleus envelope. The protein resides in the nucleus. It localises to the nucleoplasm. The protein localises to the cytoplasm. Cell cycle-dependent nuclear envelope component required for embryonic mitosis. This is Mitosis initiation protein fs(1)Ya (fs(1)Ya) from Drosophila melanogaster (Fruit fly).